The sequence spans 452 residues: Cobyrinate a,c-diamide synthase (452 aa).

Residues 248-441 (RVAYALDAAF…LHIHFYQNLA (194 aa)) enclose the GATase cobBQ-type domain. The Nucleophile role is filled by cysteine 330.

Belongs to the CobB/CbiA family. Mg(2+) is required as a cofactor.

It catalyses the reaction cob(II)yrinate + 2 L-glutamine + 2 ATP + 2 H2O = cob(II)yrinate a,c diamide + 2 L-glutamate + 2 ADP + 2 phosphate + 2 H(+). The protein operates within cofactor biosynthesis; adenosylcobalamin biosynthesis; cob(II)yrinate a,c-diamide from sirohydrochlorin (anaerobic route): step 10/10. In terms of biological role, catalyzes the ATP-dependent amidation of the two carboxylate groups at positions a and c of cobyrinate, using either L-glutamine or ammonia as the nitrogen source. The polypeptide is Cobyrinate a,c-diamide synthase (Listeria monocytogenes serovar 1/2a (strain ATCC BAA-679 / EGD-e)).